Reading from the N-terminus, the 141-residue chain is Large ribosomal subunit protein uL11 (141 aa).

The protein belongs to the universal ribosomal protein uL11 family. As to quaternary structure, part of the ribosomal stalk of the 50S ribosomal subunit. Interacts with L10 and the large rRNA to form the base of the stalk. L10 forms an elongated spine to which L12 dimers bind in a sequential fashion forming a multimeric L10(L12)X complex. In terms of processing, one or more lysine residues are methylated.

In terms of biological role, forms part of the ribosomal stalk which helps the ribosome interact with GTP-bound translation factors. This Thermotoga petrophila (strain ATCC BAA-488 / DSM 13995 / JCM 10881 / RKU-1) protein is Large ribosomal subunit protein uL11.